The sequence spans 246 residues: MAVRAQFENSNEVGVFSTLTNSYALVAVGASENFYSVFEAELQDVIPICRTTIAGTRIIGRLTAGNRKGLLVPTSTSDQELQHLRNSLPDDVRIQRIEERLSALGNVIVCNDHTALIHPDLERETEEIIADVLGVEVFRQTIADNVLVGSYMSLSNQGGLVHPKTSIQDQDELSSLLQVPLVAGSVNRGSNVIGGGMVVNDWMAVTGLDTTAPELSVIESVFRLGEGAAPGQINSSLKDTMVESFY.

Residues S174 and S175 each carry the phosphoserine; by CK1 modification.

This sequence belongs to the eIF-6 family. In terms of assembly, monomer. Associates with the 60S ribosomal subunit. Post-translationally, phosphorylation at Ser-174 and Ser-175 promotes nuclear export.

The protein resides in the cytoplasm. The protein localises to the nucleus. It localises to the nucleolus. In terms of biological role, binds to the 60S ribosomal subunit and prevents its association with the 40S ribosomal subunit to form the 80S initiation complex in the cytoplasm. Is also involved in ribosome biogenesis. Associates with pre-60S subunits in the nucleus and is involved in its nuclear export. This is Eukaryotic translation initiation factor 6 from Sordaria macrospora (strain ATCC MYA-333 / DSM 997 / K(L3346) / K-hell).